The chain runs to 501 residues: Lysine--tRNA ligase (501 aa).

2 residues coordinate Mg(2+): Glu-411 and Glu-418.

This sequence belongs to the class-II aminoacyl-tRNA synthetase family. As to quaternary structure, homodimer. Mg(2+) serves as cofactor.

It localises to the cytoplasm. The enzyme catalyses tRNA(Lys) + L-lysine + ATP = L-lysyl-tRNA(Lys) + AMP + diphosphate. In Magnetococcus marinus (strain ATCC BAA-1437 / JCM 17883 / MC-1), this protein is Lysine--tRNA ligase.